Here is an 818-residue protein sequence, read N- to C-terminus: LPS-assembly protein LptD (818 aa).

The signal sequence occupies residues 1–33 (MVNETMKHQFKFNPLATAIFTLLCSGSIQSSYA).

Belongs to the LptD family. As to quaternary structure, component of the lipopolysaccharide transport and assembly complex. Interacts with LptE and LptA.

The protein resides in the cell outer membrane. In terms of biological role, together with LptE, is involved in the assembly of lipopolysaccharide (LPS) at the surface of the outer membrane. The protein is LPS-assembly protein LptD of Acinetobacter baumannii (strain ATCC 19606 / DSM 30007 / JCM 6841 / CCUG 19606 / CIP 70.34 / NBRC 109757 / NCIMB 12457 / NCTC 12156 / 81).